We begin with the raw amino-acid sequence, 160 residues long: Sperm protein associated with the nucleus on the X chromosome N2 (160 aa).

2 disordered regions span residues 1-48 and 64-160; these read MEKP…TSEY and SNQL…GEED. Basic and acidic residues predominate over residues 10 to 35; it reads GEKRKSPCDSNNRNDEMQETPNRDLA. The segment covering 64-79 has biased composition (polar residues); sequence SNQLENDQSQENSVNP. The segment covering 81–97 has biased composition (acidic residues); sequence QEEEDEGSSQEDEDLDS. The span at 136-148 shows a compositional bias: basic and acidic residues; the sequence is SSERSSQEEKDPD.

Belongs to the SPAN-X family.

This is Sperm protein associated with the nucleus on the X chromosome N2 (SPANXN2) from Pongo pygmaeus (Bornean orangutan).